The sequence spans 203 residues: Holliday junction branch migration complex subunit RuvA (203 aa).

The segment at 1–63 (MIGKLSGKID…EEHIHLYGFL (63 aa)) is domain I. A domain II region spans residues 64 to 142 (TLEEKNFFNL…KISSGSVIIK (79 aa)). The interval 143 to 149 (DSLNIKN) is flexible linker. The domain III stretch occupies residues 150 to 203 (ITPVASNEVIKALVNLGFSRFEAQNAVQGIIIQNPEISIDELIKTALKNRNAGL).

The protein belongs to the RuvA family. Homotetramer. Forms an RuvA(8)-RuvB(12)-Holliday junction (HJ) complex. HJ DNA is sandwiched between 2 RuvA tetramers; dsDNA enters through RuvA and exits via RuvB. An RuvB hexamer assembles on each DNA strand where it exits the tetramer. Each RuvB hexamer is contacted by two RuvA subunits (via domain III) on 2 adjacent RuvB subunits; this complex drives branch migration. In the full resolvosome a probable DNA-RuvA(4)-RuvB(12)-RuvC(2) complex forms which resolves the HJ.

The protein localises to the cytoplasm. The RuvA-RuvB-RuvC complex processes Holliday junction (HJ) DNA during genetic recombination and DNA repair, while the RuvA-RuvB complex plays an important role in the rescue of blocked DNA replication forks via replication fork reversal (RFR). RuvA specifically binds to HJ cruciform DNA, conferring on it an open structure. The RuvB hexamer acts as an ATP-dependent pump, pulling dsDNA into and through the RuvAB complex. HJ branch migration allows RuvC to scan DNA until it finds its consensus sequence, where it cleaves and resolves the cruciform DNA. This Rickettsia felis (strain ATCC VR-1525 / URRWXCal2) (Rickettsia azadi) protein is Holliday junction branch migration complex subunit RuvA.